The sequence spans 321 residues: Holliday junction branch migration complex subunit RuvB (321 aa).

The interval 1–173 is large ATPase domain (RuvB-L); that stretch reads MMMEQECVDD…FGIISRLEFY (173 aa). ATP-binding positions include I12, R13, G54, K57, T58, T59, 120–122, R163, Y173, and R210; that span reads EDF. T58 provides a ligand contact to Mg(2+). Positions 174 to 244 are small ATPAse domain (RuvB-S); that stretch reads TPAELACIVK…LASDALARMD (71 aa). Positions 247–321 are head domain (RuvB-H); that stretch reads ELGLDQMDRK…KAYRHMNLLA (75 aa). The DNA site is built by R302 and R307.

Belongs to the RuvB family. In terms of assembly, homohexamer. Forms an RuvA(8)-RuvB(12)-Holliday junction (HJ) complex. HJ DNA is sandwiched between 2 RuvA tetramers; dsDNA enters through RuvA and exits via RuvB. An RuvB hexamer assembles on each DNA strand where it exits the tetramer. Each RuvB hexamer is contacted by two RuvA subunits (via domain III) on 2 adjacent RuvB subunits; this complex drives branch migration. In the full resolvosome a probable DNA-RuvA(4)-RuvB(12)-RuvC(2) complex forms which resolves the HJ.

The protein resides in the cytoplasm. The enzyme catalyses ATP + H2O = ADP + phosphate + H(+). Its function is as follows. The RuvA-RuvB-RuvC complex processes Holliday junction (HJ) DNA during genetic recombination and DNA repair, while the RuvA-RuvB complex plays an important role in the rescue of blocked DNA replication forks via replication fork reversal (RFR). RuvA specifically binds to HJ cruciform DNA, conferring on it an open structure. The RuvB hexamer acts as an ATP-dependent pump, pulling dsDNA into and through the RuvAB complex. RuvB forms 2 homohexamers on either side of HJ DNA bound by 1 or 2 RuvA tetramers; 4 subunits per hexamer contact DNA at a time. Coordinated motions by a converter formed by DNA-disengaged RuvB subunits stimulates ATP hydrolysis and nucleotide exchange. Immobilization of the converter enables RuvB to convert the ATP-contained energy into a lever motion, pulling 2 nucleotides of DNA out of the RuvA tetramer per ATP hydrolyzed, thus driving DNA branch migration. The RuvB motors rotate together with the DNA substrate, which together with the progressing nucleotide cycle form the mechanistic basis for DNA recombination by continuous HJ branch migration. Branch migration allows RuvC to scan DNA until it finds its consensus sequence, where it cleaves and resolves cruciform DNA. This is Holliday junction branch migration complex subunit RuvB from Oleidesulfovibrio alaskensis (strain ATCC BAA-1058 / DSM 17464 / G20) (Desulfovibrio alaskensis).